A 250-amino-acid polypeptide reads, in one-letter code: Probable aquaporin TIP2-2 (250 aa).

Residue methionine 1 is modified to N-acetylmethionine. The Cytoplasmic segment spans residues 1-24 (MVKIEIGSVGDSFSVASLKAYLSE). Residue lysine 3 is modified to N6,N6-dimethyllysine. Residues 25–45 (FIATLLFVFAGVGSALAFAKL) form a helical membrane-spanning segment. Over 46–53 (TSDAALDP) the chain is Vacuolar. A helical membrane pass occupies residues 54–74 (AGLVAVAVAHAFALFVGVSIA). Over 75 to 101 (ANISGGHLNPAVTLGLAVGGNITVITG) the chain is Cytoplasmic. An NPA 1 motif is present at residues 83-85 (NPA). A helical transmembrane segment spans residues 102-122 (FFYWIAQCLGSIVACLLLVFV). The Vacuolar portion of the chain corresponds to 123-133 (TNGESVPTHGV). A helical membrane pass occupies residues 134 to 154 (AAGLGAIEGVVMEIVVTFALV). The Cytoplasmic segment spans residues 155–168 (YTVYATAADPKKGS). The helical transmembrane segment at 169-189 (LGTIAPIAIGFIVGANILAAG) threads the bilayer. At 190–210 (PFSGGSMNPARSFGPAVVSGD) the chain is on the vacuolar side. The short motif at 197–199 (NPA) is the NPA 2 element. A helical transmembrane segment spans residues 211–231 (FSQIWIYWVGPLVGGALAGLI). The Cytoplasmic portion of the chain corresponds to 232 to 250 (YGDVFIGSYAPAPTTESYP). Position 248 is a phosphoserine (serine 248).

The protein belongs to the MIP/aquaporin (TC 1.A.8) family. TIP (TC 1.A.8.10) subfamily. As to quaternary structure, interacts with cucumber mosaic virus (CMV) Protein 1a. Expressed above groung and in roots.

The protein localises to the vacuole membrane. Aquaporins facilitate the transport of water and small neutral solutes across cell membranes. The chain is Probable aquaporin TIP2-2 (TIP2-2) from Arabidopsis thaliana (Mouse-ear cress).